Reading from the N-terminus, the 282-residue chain is [PSI+] induction protein 2 (282 aa).

The helical transmembrane segment at 43–63 (IIAIVGIVLACILVIWLIGGL) threads the bilayer. Residues asparagine 91 and asparagine 132 are each glycosylated (N-linked (GlcNAc...) asparagine). Threonine 141 carries the post-translational modification Phosphothreonine. 2 disordered regions span residues 153 to 183 (FDLE…VAPL) and 246 to 282 (LQGN…DRYY). The span at 253 to 282 (TPSSNHRSPYPTENYQSYQGYKPNQSDRYY) shows a compositional bias: polar residues. Residue asparagine 276 is glycosylated (N-linked (GlcNAc...) asparagine).

Its subcellular location is the membrane. Functionally, not known. Seems to be able to provoque the non-Mendelian trait [PIN(+)] which is required for the de novo appearance of the [PSI(+)] prion. The protein is [PSI+] induction protein 2 (PIN2) of Saccharomyces cerevisiae (strain ATCC 204508 / S288c) (Baker's yeast).